The chain runs to 448 residues: N-succinylarginine dihydrolase (448 aa).

Residues 19-28 (GGLSYGNVAS), Asn-110, and 137-138 (HR) each bind substrate. Glu-174 is a catalytic residue. Residue Arg-214 coordinates substrate. Residue His-250 is part of the active site. Asp-252 and Asn-365 together coordinate substrate. Cys-371 (nucleophile) is an active-site residue.

The protein belongs to the succinylarginine dihydrolase family. Homodimer.

It catalyses the reaction N(2)-succinyl-L-arginine + 2 H2O + 2 H(+) = N(2)-succinyl-L-ornithine + 2 NH4(+) + CO2. It participates in amino-acid degradation; L-arginine degradation via AST pathway; L-glutamate and succinate from L-arginine: step 2/5. In terms of biological role, catalyzes the hydrolysis of N(2)-succinylarginine into N(2)-succinylornithine, ammonia and CO(2). This is N-succinylarginine dihydrolase from Pseudomonas paraeruginosa (strain DSM 24068 / PA7) (Pseudomonas aeruginosa (strain PA7)).